The sequence spans 1453 residues: Collagen alpha-1(I) chain (1453 aa).

A signal peptide spans Met1 to Gly22. The propeptide at Gln23–Ser151 is N-terminal propeptide. The region spanning Val29 to Pro87 is the VWFC domain. A glycan (N-linked (GlcNAc...) asparagine) is linked at Asn56. The tract at residues Asn94 to Ala1210 is disordered. 2 stretches are compositionally biased toward pro residues: residues Pro109–Pro118 and Pro128–Pro143. The interval Gln152–Pro167 is nonhelical region (N-terminal). Lys160 is modified (allysine). Position 161 is a phosphoserine (Ser161). The triple-helical region stretch occupies residues Gly168–Pro1181. 4-hydroxyproline occurs at positions 179, 182, 185, 194, 197, 200, 215, 230, 236, 245, and 251. Residues Gly198 to Gly207 show a composition bias toward gly residues. Residues Asn218–Glu232 are compositionally biased toward basic and acidic residues. Residue Lys254 is modified to 5-hydroxylysine; alternate. Lys254 is a glycosylation site (O-linked (Gal...) hydroxylysine; alternate). Ser260 is modified (phosphoserine). The span at Asp268 to Asn284 shows a compositional bias: low complexity. 4-hydroxyproline is present on residues Pro278, Pro281, Pro287, Pro296, and Pro302. The span at Thr307 to Ala320 shows a compositional bias: low complexity. The span at Pro322–Phe334 shows a compositional bias: pro residues. Pro323, Pro332, Pro335, Pro362, Pro365, Pro377, Pro383, Pro392, Pro398, Pro401, and Pro416 each carry 4-hydroxyproline. Residues Ala368–Ser407 are compositionally biased toward low complexity. At Lys419 the chain carries 5-hydroxylysine. 4-hydroxyproline occurs at positions 425, 428, 440, 449, 464, 470, 479, and 485. The segment covering Gly474–Gly483 has biased composition (gly residues). Position 494 is a 5-hydroxylysine (Lys494). Residues Glu499–Ala515 are compositionally biased toward low complexity. 4-hydroxyproline occurs at positions 503, 512, 518, 524, 533, 536, 545, 554, 560, 572, 581, 590, 593, 611, 629, 635, 641, 647, 653, 659, 671, 680, 692, 704, 707, 713, 719, and 728. Residues Lys527–Ala566 are compositionally biased toward low complexity. Residues Gln623–Gln650 show a composition bias toward low complexity. Low complexity-rich tracts occupy residues Pro685 to Asp695 and Ala703 to Gln716. The Cell attachment site motif lies at Arg734–Asp736. Position 740 is a 5-hydroxylysine (Lys740). A 4-hydroxyproline mark is found at Pro746, Pro761, and Pro767. At Ser776 the chain carries Phosphoserine. 7 positions are modified to 4-hydroxyproline: Pro788, Pro797, Pro806, Pro812, Pro830, Pro839, and Pro848. The segment covering Ala800 to Lys815 has biased composition (low complexity). Over residues Pro829–Pro841 the composition is skewed to pro residues. The segment covering Ile842–Val872 has biased composition (low complexity). Lys851 bears the 5-hydroxylysine mark. 4-hydroxyproline occurs at positions 860 and 866. Position 874 is a 3-hydroxyproline (Pro874). 4-hydroxyproline is present on residues Pro875, Pro884, Pro887, Pro908, Pro917, Pro926, Pro935, Pro953, Pro962, Pro965, Pro971, Pro986, Pro992, Pro998, Pro1007, and Pro1013. The segment covering Glu901–Glu910 has biased composition (low complexity). The span at Ala920–Pro935 shows a compositional bias: low complexity. Over residues Pro985–Ala995 the composition is skewed to pro residues. The segment covering Pro997–Ser1012 has biased composition (low complexity). Lys1022 bears the 5-hydroxylysine mark. The segment covering Ala1031–Val1046 has biased composition (pro residues). 3 positions are modified to 4-hydroxyproline: Pro1034, Pro1037, and Pro1040. Residues Ile1067–Pro1081 show a composition bias toward low complexity. A Cell attachment site motif is present at residues Arg1082 to Asp1084. Positions Arg1082–Ile1096 are enriched in basic and acidic residues. Lys1085 carries the post-translational modification 5-hydroxylysine. Position 1097 is a 5-hydroxylysine; alternate (Lys1097). Residue Lys1097 is glycosylated (O-linked (Gal...) hydroxylysine; alternate). Positions Phe1102–Pro1148 are enriched in low complexity. 4-hydroxyproline is present on residues Pro1109, Pro1112, Pro1115, Pro1133, and Pro1148. Pro1153 carries the post-translational modification 3-hydroxyproline. Position 1154 is a 4-hydroxyproline (Pro1154). Positions Ala1166–Pro1181 are enriched in pro residues. At Pro1168 the chain carries 3-hydroxyproline. Pro1169 is modified (4-hydroxyproline). Pro1171 bears the 3-hydroxyproline mark. Pro1172 is modified (4-hydroxyproline). Pro1174 carries the 3-hydroxyproline modification. 4-hydroxyproline is present on residues Pro1175, Pro1178, and Pro1181. The interval Ser1182 to Ala1207 is nonhelical region (C-terminal). An Allysine modification is found at Lys1197. Over residues Lys1197–Ala1210 the composition is skewed to basic and acidic residues. A propeptide spans Asp1208–Val1453 (C-terminal propeptide). The Fibrillar collagen NC1 domain maps to Leu1218–Val1453. 3 cysteine pairs are disulfide-bonded: Cys1248–Cys1280, Cys1288–Cys1451, and Cys1359–Cys1404. Positions 1266, 1268, 1269, 1271, and 1274 each coordinate Ca(2+). Asn1354 carries an N-linked (GlcNAc...) asparagine glycan.

Belongs to the fibrillar collagen family. In terms of assembly, trimers of one alpha 2(I) and two alpha 1(I) chains. Interacts with MRC2. Interacts with TRAM2. Interacts with MFAP4 in a Ca (2+)-dependent manner. Post-translationally, contains mostly 4-hydroxyproline. Proline residues at the third position of the tripeptide repeating unit (G-X-Y) are hydroxylated in some or all of the chains. Contains 3-hydroxyproline at a few sites. This modification occurs on the first proline residue in the sequence motif Gly-Pro-Hyp, where Hyp is 4-hydroxyproline. In terms of processing, lysine residues at the third position of the tripeptide repeating unit (G-X-Y) are 5-hydroxylated in some or all of the chains. Post-translationally, O-glycosylated on hydroxylated lysine residues. The O-linked glycan consists of a Glc-Gal disaccharide. As to expression, forms the fibrils of tendon, ligaments and bones. In bones the fibrils are mineralized with calcium hydroxyapatite.

Its subcellular location is the secreted. It is found in the extracellular space. It localises to the extracellular matrix. In terms of biological role, type I collagen is a member of group I collagen (fibrillar forming collagen). The protein is Collagen alpha-1(I) chain of Mus musculus (Mouse).